A 288-amino-acid polypeptide reads, in one-letter code: Bis(5'-nucleosyl)-tetraphosphatase, symmetrical (288 aa).

It belongs to the Ap4A hydrolase family.

It catalyses the reaction P(1),P(4)-bis(5'-adenosyl) tetraphosphate + H2O = 2 ADP + 2 H(+). Functionally, hydrolyzes diadenosine 5',5'''-P1,P4-tetraphosphate to yield ADP. This is Bis(5'-nucleosyl)-tetraphosphatase, symmetrical from Pseudomonas putida (strain GB-1).